We begin with the raw amino-acid sequence, 184 residues long: Protein Syd (184 aa).

Belongs to the Syd family.

The protein resides in the cell inner membrane. In terms of biological role, interacts with the SecY protein in vivo. May bind preferentially to an uncomplexed state of SecY, thus functioning either as a chelating agent for excess SecY in the cell or as a regulatory factor that negatively controls the translocase function. The protein is Protein Syd of Psychromonas ingrahamii (strain DSM 17664 / CCUG 51855 / 37).